Reading from the N-terminus, the 569-residue chain is Acetate/butyrate--CoA ligase AAE7, peroxisomal (569 aa).

The Microbody targeting signal motif lies at 567–569; it reads SRL.

This sequence belongs to the ATP-dependent AMP-binding enzyme family. Expressed in roots, leaves, stems, flowers and developing seeds.

The protein resides in the peroxisome. The enzyme catalyses acetate + ATP + CoA = acetyl-CoA + AMP + diphosphate. It carries out the reaction a medium-chain fatty acid + ATP + CoA = a medium-chain fatty acyl-CoA + AMP + diphosphate. Peroxisomal acetate/butyrate--CoA ligase that is probably involved in the activation of exogenous acetate for entry into the glyoxylate cycle. May play a role to prevent carbon loss from peroxisomes during lipid mobilization. In vitro, is active with both acetate and butyrate. The sequence is that of Acetate/butyrate--CoA ligase AAE7, peroxisomal (AAE7) from Arabidopsis thaliana (Mouse-ear cress).